A 209-amino-acid polypeptide reads, in one-letter code: 2-phospho-L-lactate guanylyltransferase (209 aa).

This sequence belongs to the CofC family. As to quaternary structure, homodimer.

The catalysed reaction is (2S)-2-phospholactate + GTP + H(+) = (2S)-lactyl-2-diphospho-5'-guanosine + diphosphate. Its pathway is cofactor biosynthesis; coenzyme F420 biosynthesis. Guanylyltransferase that catalyzes the activation of (2S)-2-phospholactate (2-PL) as (2S)-lactyl-2-diphospho-5'-guanosine, via the condensation of 2-PL with GTP. It is involved in the biosynthesis of coenzyme F420, a hydride carrier cofactor. This Halobacterium salinarum (strain ATCC 29341 / DSM 671 / R1) protein is 2-phospho-L-lactate guanylyltransferase.